The primary structure comprises 880 residues: Leucine--tRNA ligase (880 aa).

The 'HIGH' region signature appears at 49-59; sequence PYPSGRIHMGH. The 'KMSKS' region motif lies at 638-642; that stretch reads KMSKS. Residue Lys641 coordinates ATP.

The protein belongs to the class-I aminoacyl-tRNA synthetase family.

Its subcellular location is the cytoplasm. The catalysed reaction is tRNA(Leu) + L-leucine + ATP = L-leucyl-tRNA(Leu) + AMP + diphosphate. The polypeptide is Leucine--tRNA ligase (Bartonella quintana (strain Toulouse) (Rochalimaea quintana)).